The primary structure comprises 223 residues: GrpE protein homolog, mitochondrial (223 aa).

It belongs to the GrpE family. Component of the PAM complex, at least composed of mtHsp70, mge1, tim44, pam16, pam17 and pam18.

Its subcellular location is the mitochondrion matrix. Essential component of the PAM complex, a complex required for the translocation of transit peptide-containing proteins from the inner membrane into the mitochondrial matrix in an ATP-dependent manner. Seems to control the nucleotide-dependent binding of ssc1 to substrate proteins. In Schizosaccharomyces pombe (strain 972 / ATCC 24843) (Fission yeast), this protein is GrpE protein homolog, mitochondrial (mge1).